Here is a 102-residue protein sequence, read N- to C-terminus: MMSRKSVIQRNLKRISICDRLKSKREKLRAIIKDQSISMNDRFLAQVKLSKLPRDSSYIRIRNRCLITGRPRGCYRKFKVSRIVLRQLGSIGQIPGLTKSSW.

The protein belongs to the universal ribosomal protein uS14 family. As to quaternary structure, part of the 30S ribosomal subunit. Contacts proteins S3 and S10.

Its function is as follows. Binds 16S rRNA, required for the assembly of 30S particles and may also be responsible for determining the conformation of the 16S rRNA at the A site. The protein is Small ribosomal subunit protein uS14 of Ehrlichia ruminantium (strain Gardel).